Reading from the N-terminus, the 258-residue chain is Thiazole synthase (258 aa).

Residue lysine 100 is the Schiff-base intermediate with DXP of the active site. 1-deoxy-D-xylulose 5-phosphate is bound by residues glycine 161, 187–188 (AG), and 209–210 (NT).

This sequence belongs to the ThiG family. In terms of assembly, homotetramer. Forms heterodimers with either ThiH or ThiS.

It is found in the cytoplasm. It carries out the reaction [ThiS sulfur-carrier protein]-C-terminal-Gly-aminoethanethioate + 2-iminoacetate + 1-deoxy-D-xylulose 5-phosphate = [ThiS sulfur-carrier protein]-C-terminal Gly-Gly + 2-[(2R,5Z)-2-carboxy-4-methylthiazol-5(2H)-ylidene]ethyl phosphate + 2 H2O + H(+). It functions in the pathway cofactor biosynthesis; thiamine diphosphate biosynthesis. Catalyzes the rearrangement of 1-deoxy-D-xylulose 5-phosphate (DXP) to produce the thiazole phosphate moiety of thiamine. Sulfur is provided by the thiocarboxylate moiety of the carrier protein ThiS. In vitro, sulfur can be provided by H(2)S. This is Thiazole synthase from Campylobacter jejuni subsp. jejuni serotype O:2 (strain ATCC 700819 / NCTC 11168).